Reading from the N-terminus, the 243-residue chain is Exosome complex component Rrp41 (243 aa).

This sequence belongs to the RNase PH family. Rrp41 subfamily. Component of the archaeal exosome complex. Forms a hexameric ring-like arrangement composed of 3 Rrp41-Rrp42 heterodimers. The hexameric ring associates with a trimer of Rrp4 and/or Csl4 subunits.

The protein localises to the cytoplasm. In terms of biological role, catalytic component of the exosome, which is a complex involved in RNA degradation. Has 3'-&gt;5' exoribonuclease activity. Can also synthesize heteromeric RNA-tails. This chain is Exosome complex component Rrp41, found in Sulfurisphaera tokodaii (strain DSM 16993 / JCM 10545 / NBRC 100140 / 7) (Sulfolobus tokodaii).